We begin with the raw amino-acid sequence, 379 residues long: Succinate--CoA ligase [ADP-forming] subunit beta (379 aa).

One can recognise an ATP-grasp domain in the interval R9 to R237. ATP contacts are provided by residues K45, G52–G54, I94, and E99. N192 and D206 together coordinate Mg(2+). Substrate-binding positions include N257 and G314 to T316.

Belongs to the succinate/malate CoA ligase beta subunit family. In terms of assembly, heterotetramer of two alpha and two beta subunits. Requires Mg(2+) as cofactor.

It carries out the reaction succinate + ATP + CoA = succinyl-CoA + ADP + phosphate. The enzyme catalyses GTP + succinate + CoA = succinyl-CoA + GDP + phosphate. Its pathway is carbohydrate metabolism; tricarboxylic acid cycle; succinate from succinyl-CoA (ligase route): step 1/1. Succinyl-CoA synthetase functions in the citric acid cycle (TCA), coupling the hydrolysis of succinyl-CoA to the synthesis of either ATP or GTP and thus represents the only step of substrate-level phosphorylation in the TCA. The beta subunit provides nucleotide specificity of the enzyme and binds the substrate succinate, while the binding sites for coenzyme A and phosphate are found in the alpha subunit. This is Succinate--CoA ligase [ADP-forming] subunit beta from Roseiflexus sp. (strain RS-1).